The primary structure comprises 702 residues: Protein crooked neck (702 aa).

HAT repeat units follow at residues 56–88 (DYQQ…WEEQ), 90–122 (QEIQ…MEMK), 124–156 (KQVN…MEEM), 158–189 (ENVA…FELR), 191–222 (KEID…FEES), 224–259 (GFIH…FEEG), 261–295 (KEHD…HEKK), 305–337 (VIVS…LIEA), 339–373 (GDRD…LWIN), 383–419 (EDAE…FEIR), 454–486 (REFE…LENL), 488–522 (GDTD…FEVA), and 524–555 (GETE…FEMG). A Nuclear localization signal motif is present at residues 620-628 (PRRIKKRQK). A disordered region spans residues 670 to 702 (KDNTVDDPPATAIASEPEPAADAAPADTTDSGD). The span at 683–702 (ASEPEPAADAAPADTTDSGD) shows a compositional bias: low complexity.

This sequence belongs to the crooked-neck family. In terms of assembly, colocalizes with a complex containing snRNP proteins. As to expression, transcribed in all cells during embryonic development.

It localises to the nucleus speckle. Its function is as follows. May be involved in pre-mRNA splicing process. Involved in embryonic neurogenesis and cell rearrangement during Malpighian tubule morphogenesis. This chain is Protein crooked neck (crn), found in Drosophila melanogaster (Fruit fly).